The primary structure comprises 683 residues: MQQLSLLDSVVIPDTAQLRAAELRRLLEHHNRCYYELDSPEISDAEYDALFRELQVIEAARPDLLTPDSPTLRVGGKPLARFSQVRHRMPMLSLENAMQEDEIRGFEQRIRSLLALPDTVALQYQCEPKMDGLAVELVYQDGLLVQASTRGDGEVGEEVTANIRTVRNVPLRLTGDNLPALLEVRGEVYLPLAAFQQLNQQREEAGEPPFANPRNAAAGSIRQLDPAVVARRPLAMVCYGVGVMETEARTQTELMSQLAAWGLPVSDQARQVSGIEGAIACFQDLQERRDSLLYEIDGMVIKVDDLRLQQELGEKSRSPRWAIACKFPPRQATTRINEIILSVGRTGVITPVASLEPVELSGVTVSRATLHNWDEIRRKDIRVGDRVIVERAGDVIPAVVKVLLDKRSGTEQELPEPETCPVCGSRAAREAGEVAVRCQGGLACPPQLAESIIHFASRDAMDIDGLGSKYIEQLISLGLVKDIADLYRLTRDDFMQFERMGDKLAENLLAAIASSKQQELSRFIFALGIRHVGERTARTLAERFGSIDNLQTATLEELTSIRDVGPAVAISIRSFFDAPANQTVLQRLKAAGVAPTVEEKRVGGRLAGLTFVFTGTLATLGRDEAKKLVEAEGGNVTGSVSKKTDYVVAGSEAGSKLEKARNLGITVLSEDAFSKLLATGGNQ.

Residues 44–48 (DAEYD), 93–94 (SL), and Glu-127 contribute to the NAD(+) site. Residue Lys-129 is the N6-AMP-lysine intermediate of the active site. NAD(+)-binding residues include Arg-150, Glu-187, Lys-302, and Lys-326. Cys-420, Cys-423, Cys-438, and Cys-444 together coordinate Zn(2+). Residues 601 to 683 (RVGGRLAGLT…SKLLATGGNQ (83 aa)) enclose the BRCT domain.

Belongs to the NAD-dependent DNA ligase family. LigA subfamily. It depends on Mg(2+) as a cofactor. Requires Mn(2+) as cofactor.

The catalysed reaction is NAD(+) + (deoxyribonucleotide)n-3'-hydroxyl + 5'-phospho-(deoxyribonucleotide)m = (deoxyribonucleotide)n+m + AMP + beta-nicotinamide D-nucleotide.. In terms of biological role, DNA ligase that catalyzes the formation of phosphodiester linkages between 5'-phosphoryl and 3'-hydroxyl groups in double-stranded DNA using NAD as a coenzyme and as the energy source for the reaction. It is essential for DNA replication and repair of damaged DNA. This Trichlorobacter lovleyi (strain ATCC BAA-1151 / DSM 17278 / SZ) (Geobacter lovleyi) protein is DNA ligase.